A 466-amino-acid chain; its full sequence is 23S rRNA (uracil(1939)-C(5))-methyltransferase RlmD (466 aa).

A TRAM domain is found at M1–E54. 4 residues coordinate [4Fe-4S] cluster: C67, C73, C76, and C155. Q264, F293, N298, E314, N342, and D363 together coordinate S-adenosyl-L-methionine. C393 (nucleophile) is an active-site residue.

This sequence belongs to the class I-like SAM-binding methyltransferase superfamily. RNA M5U methyltransferase family. RlmD subfamily.

The catalysed reaction is uridine(1939) in 23S rRNA + S-adenosyl-L-methionine = 5-methyluridine(1939) in 23S rRNA + S-adenosyl-L-homocysteine + H(+). Its function is as follows. Catalyzes the formation of 5-methyl-uridine at position 1939 (m5U1939) in 23S rRNA. In Bordetella bronchiseptica (strain ATCC BAA-588 / NCTC 13252 / RB50) (Alcaligenes bronchisepticus), this protein is 23S rRNA (uracil(1939)-C(5))-methyltransferase RlmD.